A 225-amino-acid chain; its full sequence is NAD(P)H-quinone oxidoreductase subunit K, chloroplastic (225 aa).

[4Fe-4S] cluster-binding residues include Cys43, Cys44, Cys108, and Cys139.

It belongs to the complex I 20 kDa subunit family. As to quaternary structure, NDH is composed of at least 16 different subunits, 5 of which are encoded in the nucleus. The cofactor is [4Fe-4S] cluster.

Its subcellular location is the plastid. The protein localises to the chloroplast thylakoid membrane. The enzyme catalyses a plastoquinone + NADH + (n+1) H(+)(in) = a plastoquinol + NAD(+) + n H(+)(out). It catalyses the reaction a plastoquinone + NADPH + (n+1) H(+)(in) = a plastoquinol + NADP(+) + n H(+)(out). Its function is as follows. NDH shuttles electrons from NAD(P)H:plastoquinone, via FMN and iron-sulfur (Fe-S) centers, to quinones in the photosynthetic chain and possibly in a chloroplast respiratory chain. The immediate electron acceptor for the enzyme in this species is believed to be plastoquinone. Couples the redox reaction to proton translocation, and thus conserves the redox energy in a proton gradient. This is NAD(P)H-quinone oxidoreductase subunit K, chloroplastic from Illicium oligandrum (Star anise).